Reading from the N-terminus, the 289-residue chain is Acetyl-coenzyme A carboxylase carboxyl transferase subunit beta 2 (289 aa).

One can recognise a CoA carboxyltransferase N-terminal domain in the interval 25–289; it reads VWTKCPSCEQ…TNKSIQPEAE (265 aa). Zn(2+) contacts are provided by Cys29, Cys32, Cys48, and Cys51. Residues 29 to 51 form a C4-type zinc finger; that stretch reads CPSCEQVLYRIALKENLEVCPKC.

This sequence belongs to the AccD/PCCB family. As to quaternary structure, acetyl-CoA carboxylase is a heterohexamer composed of biotin carboxyl carrier protein (AccB), biotin carboxylase (AccC) and two subunits each of ACCase subunit alpha (AccA) and ACCase subunit beta (AccD). It depends on Zn(2+) as a cofactor.

The protein localises to the cytoplasm. The catalysed reaction is N(6)-carboxybiotinyl-L-lysyl-[protein] + acetyl-CoA = N(6)-biotinyl-L-lysyl-[protein] + malonyl-CoA. It functions in the pathway lipid metabolism; malonyl-CoA biosynthesis; malonyl-CoA from acetyl-CoA: step 1/1. Functionally, component of the acetyl coenzyme A carboxylase (ACC) complex. Biotin carboxylase (BC) catalyzes the carboxylation of biotin on its carrier protein (BCCP) and then the CO(2) group is transferred by the transcarboxylase to acetyl-CoA to form malonyl-CoA. The sequence is that of Acetyl-coenzyme A carboxylase carboxyl transferase subunit beta 2 from Vibrio campbellii (strain ATCC BAA-1116).